The following is a 217-amino-acid chain: Probable transaldolase (217 aa).

Lys83 functions as the Schiff-base intermediate with substrate in the catalytic mechanism.

Belongs to the transaldolase family. Type 3B subfamily.

It is found in the cytoplasm. The catalysed reaction is D-sedoheptulose 7-phosphate + D-glyceraldehyde 3-phosphate = D-erythrose 4-phosphate + beta-D-fructose 6-phosphate. The protein operates within carbohydrate degradation; pentose phosphate pathway; D-glyceraldehyde 3-phosphate and beta-D-fructose 6-phosphate from D-ribose 5-phosphate and D-xylulose 5-phosphate (non-oxidative stage): step 2/3. Its function is as follows. Transaldolase is important for the balance of metabolites in the pentose-phosphate pathway. The chain is Probable transaldolase from Sinorhizobium medicae (strain WSM419) (Ensifer medicae).